We begin with the raw amino-acid sequence, 428 residues long: Serine--tRNA ligase (428 aa).

235–237 (TAE) is a binding site for L-serine. 266-268 (RSE) provides a ligand contact to ATP. L-serine is bound at residue Glu-289. 353-356 (EISS) contributes to the ATP binding site. Ser-389 contributes to the L-serine binding site.

The protein belongs to the class-II aminoacyl-tRNA synthetase family. Type-1 seryl-tRNA synthetase subfamily. In terms of assembly, homodimer. The tRNA molecule binds across the dimer.

Its subcellular location is the cytoplasm. The catalysed reaction is tRNA(Ser) + L-serine + ATP = L-seryl-tRNA(Ser) + AMP + diphosphate + H(+). The enzyme catalyses tRNA(Sec) + L-serine + ATP = L-seryl-tRNA(Sec) + AMP + diphosphate + H(+). Its pathway is aminoacyl-tRNA biosynthesis; selenocysteinyl-tRNA(Sec) biosynthesis; L-seryl-tRNA(Sec) from L-serine and tRNA(Sec): step 1/1. Its function is as follows. Catalyzes the attachment of serine to tRNA(Ser). Is also able to aminoacylate tRNA(Sec) with serine, to form the misacylated tRNA L-seryl-tRNA(Sec), which will be further converted into selenocysteinyl-tRNA(Sec). This Shewanella denitrificans (strain OS217 / ATCC BAA-1090 / DSM 15013) protein is Serine--tRNA ligase.